The chain runs to 199 residues: Small ribosomal subunit protein uS4 (199 aa).

In terms of domain architecture, S4 RNA-binding spans 91–154 (SRLDNVVYRL…KDLIIVKEAL (64 aa)).

It belongs to the universal ribosomal protein uS4 family. In terms of assembly, part of the 30S ribosomal subunit. Contacts protein S5. The interaction surface between S4 and S5 is involved in control of translational fidelity.

Functionally, one of the primary rRNA binding proteins, it binds directly to 16S rRNA where it nucleates assembly of the body of the 30S subunit. In terms of biological role, with S5 and S12 plays an important role in translational accuracy. In Phytoplasma mali (strain AT), this protein is Small ribosomal subunit protein uS4.